The primary structure comprises 395 residues: RNA polymerase II elongation factor ELL3 (395 aa).

Disordered regions lie at residues 124–149, 163–182, 194–218, and 233–279; these read SSLQ…DYPE, VPDP…SREH, LPNR…KRPA, and LAPS…SLSP. Residues 130 to 140 show a composition bias toward basic and acidic residues; the sequence is NRTEDARDRES. Positions 168 to 177 are enriched in polar residues; the sequence is ASSQGQSLPG. Positions 246–258 are enriched in acidic residues; the sequence is LQEEDWEQEDKDE. Residues 268–277 are compositionally biased toward polar residues; sequence PSVQADSESL. In terms of domain architecture, OCEL spans 283–393; it reads PDYLLQYRAI…LILEFEEKNR (111 aa).

The protein belongs to the ELL/occludin family. As to quaternary structure, interacts with AFF4. Component of the super elongation complex (SEC), at least composed of EAF1, EAF2, CDK9, MLLT3/AF9, AFF (AFF1 or AFF4), the P-TEFb complex and ELL (ELL, ELL2 or ELL3). Component of the little elongation complex (LEC), at least composed of ELL (ELL, ELL2 or ELL3), ZC3H8, ICE1 and ICE2.

It localises to the nucleus. In terms of biological role, enhancer-binding elongation factor that specifically binds enhancers in embryonic stem cells (ES cells), marks them, and is required for their future activation during stem cell specification. Elongation factor component of the super elongation complex (SEC), a complex required to increase the catalytic rate of RNA polymerase II transcription by suppressing transient pausing by the polymerase at multiple sites along the DNA. Component of the little elongation complex (LEC), a complex required to regulate small nuclear RNA (snRNA) gene transcription by RNA polymerase II and III. Does not only bind to enhancer regions of active genes, but also marks the enhancers that are in a poised or inactive state in ES cells and is required for establishing proper RNA polymerase II occupancy at developmentally regulated genes in a cohesin-dependent manner. Probably required for priming developmentally regulated genes for later recruitment of the super elongation complex (SEC), for transcriptional activation during differentiation. Required for recruitment of P-TEFb within SEC during differentiation. Probably preloaded on germ cell chromatin, suggesting that it may prime gene activation by marking enhancers as early as in the germ cells. Promoting epithelial-mesenchymal transition (EMT). The polypeptide is RNA polymerase II elongation factor ELL3 (ELL3) (Bos taurus (Bovine)).